The chain runs to 343 residues: Biotin synthase (343 aa).

The region spanning 64–291 (NTVQLSTLLS…RAMVRLSAGR (228 aa)) is the Radical SAM core domain. [4Fe-4S] cluster is bound by residues C79, C83, and C86. [2Fe-2S] cluster contacts are provided by C123, C154, C214, and R286.

This sequence belongs to the radical SAM superfamily. Biotin synthase family. In terms of assembly, homodimer. [4Fe-4S] cluster serves as cofactor. It depends on [2Fe-2S] cluster as a cofactor.

It catalyses the reaction (4R,5S)-dethiobiotin + (sulfur carrier)-SH + 2 reduced [2Fe-2S]-[ferredoxin] + 2 S-adenosyl-L-methionine = (sulfur carrier)-H + biotin + 2 5'-deoxyadenosine + 2 L-methionine + 2 oxidized [2Fe-2S]-[ferredoxin]. It functions in the pathway cofactor biosynthesis; biotin biosynthesis; biotin from 7,8-diaminononanoate: step 2/2. Its function is as follows. Catalyzes the conversion of dethiobiotin (DTB) to biotin by the insertion of a sulfur atom into dethiobiotin via a radical-based mechanism. The chain is Biotin synthase from Cupriavidus necator (strain ATCC 17699 / DSM 428 / KCTC 22496 / NCIMB 10442 / H16 / Stanier 337) (Ralstonia eutropha).